The chain runs to 604 residues: uncharacterized protein (604 aa).

It belongs to the glycosyltransferase 2 family.

This is an uncharacterized protein from Rickettsia conorii (strain ATCC VR-613 / Malish 7).